The following is a 523-amino-acid chain: Amino acid transporter protein 6 (523 aa).

At 1–19 (MLNVFGVSASMPDDSRSQK) the chain is on the cytoplasmic side. The chain crosses the membrane as a helical span at residues 20-40 (MGLLGAISYIVGNIVGSGIFI). The Extracellular portion of the chain corresponds to 41–51 (TPTSIIENVNS). A helical transmembrane segment spans residues 52 to 72 (VGLSLAIWILAAFISMLGSFC). The Cytoplasmic segment spans residues 73-86 (YVELGTSIRLSGGD). The helical transmembrane segment at 87-107 (FAYLCFMKWYPVAFAFMCIGC) threads the bilayer. Residues 108–145 (TINYPATLAVQAQTFAEYVFRGAGVELDETSEFWAKKL) lie on the Extracellular side of the membrane. Residues 146-166 (LGFSLIILLMFMNFFSLKTFV) traverse the membrane as a helical segment. The Cytoplasmic portion of the chain corresponds to 167 to 173 (QRFSILA). The helical transmembrane segment at 174–194 (SLAKIAATLLIIITGFYYLIF) threads the bilayer. Topologically, residues 195–214 (KHWKQNLEEPFKGSNWNPGP) are extracellular. A helical transmembrane segment spans residues 215–235 (FVNALFAGLFSYDGWDILNFG). The Cytoplasmic portion of the chain corresponds to 236 to 249 (AEEIENPKRTMPLS). A helical transmembrane segment spans residues 250–270 (IIIGMTCIGVIYVAVNVAYSI). Topologically, residues 271–290 (VLSPTEMIASNAVAIDFANK) are extracellular. N-linked (GlcNAc...) asparagine glycosylation occurs at N289. A helical transmembrane segment spans residues 291-311 (TLGAAAFVVPVMVAILLIGSL). Topologically, residues 312 to 348 (NSTMFSASRYLQAVSRQGHIPSAISGIAPNCDSPRVA) are cytoplasmic. Residues 349-369 (LLVHILIAIAVSFLGDPDKLI) traverse the membrane as a helical segment. The Extracellular segment spans residues 370 to 404 (NYVAFAQWSQRAFTMSALLYLRIRGRPRHPDRIQL). Residues 405-425 (PIIMPILFFLVCTSMVVISII) form a helical membrane-spanning segment. Residues 426-429 (DDFK) lie on the Cytoplasmic side of the membrane. Residues 430-450 (SSAVGLGILLGGLIIFIIFVW) form a helical membrane-spanning segment. The Extracellular portion of the chain corresponds to 451-523 (DRALPSSHTF…GNGQFKCTRM (73 aa)). A glycan (N-linked (GlcNAc...) asparagine) is linked at N462. The PDZ-binding motif motif lies at 521–523 (TRM).

The protein belongs to the amino acid-polyamine-organocation (APC) superfamily. Interacts (via PDZ-binding motif) with nfrl-1 (via PDZ 2 domain); the interaction with nrfl-1 is required to sequester aat-6 to the apical cell membrane of intestinal cells. Expressed at the apical cell membrane of intestinal cells.

The protein localises to the apical cell membrane. Its function is as follows. Amino acid transporter that mediates the uptake of the L-enantiomers of various amino acids, including L-glutamate. May play a role in promoting fertility. This Caenorhabditis elegans protein is Amino acid transporter protein 6.